Consider the following 578-residue polypeptide: NADPH oxidase 4 (578 aa).

The Cytoplasmic segment spans residues 1 to 16 (MAVSWRSWLANEGVKH). The helical transmembrane segment at 17 to 37 (LCLFIWLSMNVLLFWKTFLLY) threads the bilayer. Residues 38 to 62 (NQGPEYHYLHQMLGLGLCLSRASAS) are Extracellular-facing. A Ferric oxidoreductase domain is found at 58–303 (RASASVLNLN…YCAERLYRYI (246 aa)). The helical transmembrane segment at 63-83 (VLNLNCSLILLPMCRTLLAYL) threads the bilayer. Residues 84–103 (RGSQKVPSRRTRRLLDKSRT) lie on the Cytoplasmic side of the membrane. A helical transmembrane segment spans residues 104-124 (FHITCGVTICIFSGVHVAAHL). The Extracellular segment spans residues 125–154 (VNALNFSVNYSEDFVELNAARYRDEDPRKL). Asparagine 133 is a glycosylation site (N-linked (GlcNAc...) asparagine). The helical transmembrane segment at 155-175 (LFTTVPGLTGVCMVVVLFLMI) threads the bilayer. The Cytoplasmic segment spans residues 176-188 (TASTYAIRVSNYD). The helical transmembrane segment at 189–209 (IFWYTHNLFFVFYMLLTLHVS) threads the bilayer. Over 210-424 (GGLLKYQTNL…SPFEESLNYE (215 aa)) the chain is Extracellular. The E-loop; essential for H2O2 generating catalytic activity stretch occupies residues 218–273 (NLDTHPPGCISLNRTSSQNISLPEYFSEHFHEPFPEGFSKPAEFTQHKFVKICMEE). Asparagine 230 is a glycosylation site (N-linked (GlcNAc...) asparagine). The mediates interaction with TLR4 stretch occupies residues 248–575 (HEPFPEGFSK…YGTRFEYNKE (328 aa)). Residues 304-419 (RSNKPVTIIS…DGPFGSPFEE (116 aa)) form the FAD-binding FR-type domain. The chain crosses the membrane as a helical span at residues 425 to 445 (VSLCVAGGIGVTPFASILNTL). The Cytoplasmic portion of the chain corresponds to 446 to 578 (LDDWKPYKLR…RFEYNKESFS (133 aa)).

In terms of assembly, interacts with protein disulfide isomerase. Interacts with, relocalizes and stabilizes CYBA/p22phox. Interacts with TLR4. Interacts with PPP1R15A. Interacts with LRRC8A; this interaction prevents the ubiquitin-mediated degradation of LRRC8A. Requires heme as cofactor. Deubiquitinated by USP19. Post-translationally, N-glycosylated and glycosylation is required for its proper function. In terms of processing, N-glycosylated. Expressed by distal tubular cells in kidney cortex and in endothelial cells (at protein level). Widely expressed. Strongly expressed in kidney and to a lower extent in heart, adipocytes, hepatoma, endothelial cells, skeletal muscle, brain, several brain tumor cell lines and airway epithelial cells.

It localises to the cytoplasm. Its subcellular location is the endoplasmic reticulum membrane. It is found in the cell membrane. The protein resides in the cell junction. The protein localises to the focal adhesion. It localises to the nucleus. Its subcellular location is the nucleolus. It is found in the perinuclear region. The catalysed reaction is NADPH + 2 O2 = 2 superoxide + NADP(+) + H(+). It catalyses the reaction NADPH + O2 + H(+) = H2O2 + NADP(+). Inhibited by plumbagin. Activated by phorbol 12-myristate 13-acetate (PMA). Activated by insulin. Inhibited by diphenylene iodonium. NADPH oxidase that catalyzes predominantly the reduction of oxygen to H2O2. Can also catalyze to a smaller extent, the reduction of oxygen to superoxide. May function as an oxygen sensor regulating the KCNK3/TASK-1 potassium channel and HIF1A activity. May regulate insulin signaling cascade. May play a role in apoptosis, bone resorption and lipolysaccharide-mediated activation of NFKB. May produce superoxide in the nucleus and play a role in regulating gene expression upon cell stimulation. Promotes ferroptosis, reactive oxygen species production and reduced glutathione (GSH) levels by activating NLRP3 inflammasome activation and cytokine release. Its function is as follows. NADPH oxidase that catalyzes the generation of superoxide from molecular oxygen utilizing NADPH as an electron donor. Involved in redox signaling in vascular cells. Modulates the nuclear activation of ERK1/2 and the ELK1 transcription factor, and is capable of inducing nuclear DNA damage. In terms of biological role, lacks superoxide-generating NADPH oxidase activity. This is NADPH oxidase 4 (NOX4) from Homo sapiens (Human).